The chain runs to 105 residues: Large ribosomal subunit protein P1 (105 aa).

Met-1 is subject to Blocked amino end (Met). Over residues 65 to 76 the composition is skewed to low complexity; the sequence is VAAPAGQQTQQA. The tract at residues 65-105 is disordered; that stretch reads VAAPAGQQTQQAAEKKEEKKEEEKKGPSEEEIGGGLSSLFG. The span at 77-92 shows a compositional bias: basic and acidic residues; sequence AEKKEEKKEEEKKGPS.

It belongs to the eukaryotic ribosomal protein P1/P2 family. In terms of assembly, part of the 50S ribosomal subunit. Homodimer, it forms part of the ribosomal stalk which helps the ribosome interact with GTP-bound translation factors. Forms a heptameric uL10/P0(P1)2(P1)2(P1)2 complex, where uL10/P0 forms an elongated spine to which the P1 dimers bind in a sequential fashion.

Its function is as follows. Forms part of the ribosomal stalk, playing a central role in the interaction of the ribosome with GTP-bound translation factors. This is Large ribosomal subunit protein P1 from Sulfolobus acidocaldarius (strain ATCC 33909 / DSM 639 / JCM 8929 / NBRC 15157 / NCIMB 11770).